The primary structure comprises 481 residues: ATP synthase subunit beta (481 aa).

160–167 contacts ATP; sequence GGAGVGKT.

It belongs to the ATPase alpha/beta chains family. F-type ATPases have 2 components, CF(1) - the catalytic core - and CF(0) - the membrane proton channel. CF(1) has five subunits: alpha(3), beta(3), gamma(1), delta(1), epsilon(1). CF(0) has three main subunits: a(1), b(2) and c(9-12). The alpha and beta chains form an alternating ring which encloses part of the gamma chain. CF(1) is attached to CF(0) by a central stalk formed by the gamma and epsilon chains, while a peripheral stalk is formed by the delta and b chains.

The protein resides in the cell inner membrane. The catalysed reaction is ATP + H2O + 4 H(+)(in) = ADP + phosphate + 5 H(+)(out). Its function is as follows. Produces ATP from ADP in the presence of a proton gradient across the membrane. The catalytic sites are hosted primarily by the beta subunits. The protein is ATP synthase subunit beta of Anaeromyxobacter sp. (strain Fw109-5).